Consider the following 151-residue polypeptide: Caveolin-3 (151 aa).

Residues 1–83 (MMTEEHTDLE…RLLSTLLGVP (83 aa)) lie on the Cytoplasmic side of the membrane. Residue Lys-38 forms a Glycyl lysine isopeptide (Lys-Gly) (interchain with G-Cter in SUMO3) linkage. The interval 64–114 (TFTVSKYWCYRLLSTLLGVPLALLWGFLFACISFCHIWAVVPCIKSYLIEI) is required for interaction with DAG1. Residues 84–104 (LALLWGFLFACISFCHIWAVV) constitute an intramembrane region (helical). Topologically, residues 105 to 151 (PCIKSYLIEIQCISHIYSLCIRTFCNPLFAALGQVCSNIKVVLRREG) are cytoplasmic.

This sequence belongs to the caveolin family. As to quaternary structure, homooligomer. Interacts with DYSF. Interacts with DLG1 and KCNA5; forms a ternary complex. Interacts with DAG1 (via its C-terminal); the interaction prevents binding of DAG1 with DMD. Interacts with TRIM72. Interacts with MUSK; may regulate MUSK signaling. Interacts with POPDC1. Interacts with CAVIN1, CAVIN2 and CAVIN4. Sumoylation with SUMO3 by PIAS4 may reduce agonist-induced internalization and desensitization of adrenergic receptor ABRD2. As to expression, expressed predominantly in muscle.

The protein localises to the golgi apparatus membrane. It localises to the cell membrane. Its subcellular location is the membrane. The protein resides in the caveola. It is found in the sarcolemma. Its function is as follows. May act as a scaffolding protein within caveolar membranes. Interacts directly with G-protein alpha subunits and can functionally regulate their activity. May also regulate voltage-gated potassium channels. Plays a role in the sarcolemma repair mechanism of both skeletal muscle and cardiomyocytes that permits rapid resealing of membranes disrupted by mechanical stress. Mediates the recruitment of CAVIN2 and CAVIN3 proteins to the caveolae. The chain is Caveolin-3 from Mus musculus (Mouse).